The primary structure comprises 528 residues: ATP synthase subunit beta 2 (528 aa).

Residues 1-10 (MADPQATNGT) show a composition bias toward polar residues. The tract at residues 1–27 (MADPQATNGTGAACAERDASDVGDARD) is disordered. Basic and acidic residues predominate over residues 15–27 (AERDASDVGDARD). An ATP-binding site is contributed by 179–186 (GGAGVGKT). The span at 488-499 (AAAREADARREA) shows a compositional bias: basic and acidic residues. The disordered stretch occupies residues 488–528 (AAAREADARREAAAAASGAGPGTTSDPASGSAEPQGARHGR).

Belongs to the ATPase alpha/beta chains family. In terms of assembly, F-type ATPases have 2 components, CF(1) - the catalytic core - and CF(0) - the membrane proton channel. CF(1) has five subunits: alpha(3), beta(3), gamma(1), delta(1), epsilon(1). CF(0) has three main subunits: a(1), b(2) and c(9-12). The alpha and beta chains form an alternating ring which encloses part of the gamma chain. CF(1) is attached to CF(0) by a central stalk formed by the gamma and epsilon chains, while a peripheral stalk is formed by the delta and b chains.

It is found in the cell inner membrane. It carries out the reaction ATP + H2O + 4 H(+)(in) = ADP + phosphate + 5 H(+)(out). Its function is as follows. Produces ATP from ADP in the presence of a proton gradient across the membrane. The catalytic sites are hosted primarily by the beta subunits. The sequence is that of ATP synthase subunit beta 2 from Burkholderia pseudomallei (strain 1106a).